A 322-amino-acid chain; its full sequence is Pre-mRNA-splicing factor NTR2 (322 aa).

The segment at 1-30 (MAIKKRNKIRLPSGSPEEVGIDGSAHKPMQ) is disordered. S40 bears the Phosphoserine mark. Residues 113–137 (LLSDSSEAGSSSEGEHISSIPTRGE) form a disordered region. Over residues 115-132 (SDSSEAGSSSEGEHISSI) the composition is skewed to low complexity. A phosphoserine mark is found at S153 and S197.

In terms of assembly, component of the NTR complex (NTC-related complex), composed of NTR1, NTR2 and PRP43. Interacts with CLF1, NTR1 and PRP43.

Its subcellular location is the cytoplasm. The protein resides in the nucleus. Involved in pre-mRNA splicing and spliceosome disassembly. Promotes release of excised lariat intron from the spliceosome by acting as a receptor for PRP43. This targeting of PRP43 leads to disassembly of the spliceosome with the separation of the U2, U5, U6 snRNPs and the NTC complex. This Saccharomyces cerevisiae (strain ATCC 204508 / S288c) (Baker's yeast) protein is Pre-mRNA-splicing factor NTR2 (NTR2).